Reading from the N-terminus, the 339-residue chain is Ribosomal RNA large subunit methyltransferase F (339 aa).

Positions 1 to 26 are disordered; the sequence is MTAPSTPKPQRKKPKTATTAKPVVPR.

The protein belongs to the methyltransferase superfamily. METTL16/RlmF family.

The protein resides in the cytoplasm. It carries out the reaction adenosine(1618) in 23S rRNA + S-adenosyl-L-methionine = N(6)-methyladenosine(1618) in 23S rRNA + S-adenosyl-L-homocysteine + H(+). Functionally, specifically methylates the adenine in position 1618 of 23S rRNA. The polypeptide is Ribosomal RNA large subunit methyltransferase F (Pseudomonas fluorescens (strain SBW25)).